Reading from the N-terminus, the 446-residue chain is 3-phosphoshikimate 1-carboxyvinyltransferase (446 aa).

3 residues coordinate 3-phosphoshikimate: Lys-35, Ser-36, and Arg-40. Lys-35 provides a ligand contact to phosphoenolpyruvate. Phosphoenolpyruvate-binding residues include Gly-108 and Arg-137. Ser-182, Gln-184, Asp-332, and Lys-359 together coordinate 3-phosphoshikimate. Position 184 (Gln-184) interacts with phosphoenolpyruvate. The Proton acceptor role is filled by Asp-332. Residues Arg-363 and Arg-405 each coordinate phosphoenolpyruvate.

Belongs to the EPSP synthase family. Monomer.

The protein resides in the cytoplasm. The enzyme catalyses 3-phosphoshikimate + phosphoenolpyruvate = 5-O-(1-carboxyvinyl)-3-phosphoshikimate + phosphate. The protein operates within metabolic intermediate biosynthesis; chorismate biosynthesis; chorismate from D-erythrose 4-phosphate and phosphoenolpyruvate: step 6/7. Catalyzes the transfer of the enolpyruvyl moiety of phosphoenolpyruvate (PEP) to the 5-hydroxyl of shikimate-3-phosphate (S3P) to produce enolpyruvyl shikimate-3-phosphate and inorganic phosphate. In Acaryochloris marina (strain MBIC 11017), this protein is 3-phosphoshikimate 1-carboxyvinyltransferase.